The following is a 426-amino-acid chain: Enolase 1 (426 aa).

Position 162 (Gln-162) interacts with (2R)-2-phosphoglycerate. Glu-204 acts as the Proton donor in catalysis. Asp-241, Glu-284, and Asp-311 together coordinate Mg(2+). Positions 336, 365, 366, and 387 each coordinate (2R)-2-phosphoglycerate. Lys-336 acts as the Proton acceptor in catalysis.

Belongs to the enolase family. It depends on Mg(2+) as a cofactor.

The protein resides in the cytoplasm. It is found in the secreted. Its subcellular location is the cell surface. It carries out the reaction (2R)-2-phosphoglycerate = phosphoenolpyruvate + H2O. The protein operates within carbohydrate degradation; glycolysis; pyruvate from D-glyceraldehyde 3-phosphate: step 4/5. In terms of biological role, catalyzes the reversible conversion of 2-phosphoglycerate (2-PG) into phosphoenolpyruvate (PEP). It is essential for the degradation of carbohydrates via glycolysis. This chain is Enolase 1, found in Methanospirillum hungatei JF-1 (strain ATCC 27890 / DSM 864 / NBRC 100397 / JF-1).